Reading from the N-terminus, the 70-residue chain is Non-histone chromosomal protein H6 (70 aa).

Residues Met1 to Lys70 are disordered. Residues Ala30 to Lys45 are compositionally biased toward basic residues. The segment covering Lys46–Ala57 has biased composition (basic and acidic residues).

The protein belongs to the HMGN family.

Its subcellular location is the nucleus. The protein resides in the secreted. In terms of biological role, non-histone protein that probably binds to the inner side of nucleosomal DNA, altering the association between the DNA and the nucleosome octamer. Oncorhyncin III has antibacterial activity against Gram-positive and Gram-negative bacteria at submicromolar concentrations. The sequence is that of Non-histone chromosomal protein H6 from Oncorhynchus mykiss (Rainbow trout).